Here is a 535-residue protein sequence, read N- to C-terminus: Zinc transporter ZIP5 (535 aa).

Residues Met-1–Gly-19 form the signal peptide. Residues Trp-20 to Ala-210 lie on the Extracellular side of the membrane. N-linked (GlcNAc...) asparagine glycosylation is found at Asn-49 and Asn-158. Residues Leu-211 to Leu-231 form a helical membrane-spanning segment. Topologically, residues Leu-232–Pro-242 are cytoplasmic. The helical transmembrane segment at Val-243–Leu-263 threads the bilayer. Over Leu-264–Pro-285 the chain is Extracellular. A helical membrane pass occupies residues Gly-286 to Val-306. The Cytoplasmic segment spans residues Arg-307–Lys-439. Positions Cys-316 to His-373 are disordered. The residue at position 333 (Ser-333) is a Phosphoserine. The residue at position 371 (His-371) is a Pros-methylhistidine. A helical membrane pass occupies residues Leu-440–Gly-460. The Extracellular portion of the chain corresponds to Leu-461 to Pro-465. Residues Val-466 to Val-486 traverse the membrane as a helical segment. Topologically, residues Asp-487–His-503 are cytoplasmic. A helical transmembrane segment spans residues Val-504–Leu-524. Topologically, residues Glu-525 to Gly-535 are extracellular.

The protein belongs to the ZIP transporter (TC 2.A.5) family. In terms of assembly, homodimer. Post-translationally, N-Glycosylated. Methylated at His-371 by METTL9. In terms of tissue distribution, expressed in all stages of eye development and primarily in the sclera and several layers of the retina, including the inner segment, outer plexiform layer and ganglion cell layer. Expressed in pancreas, kidney and the proximal and distal small intestine as well as in the embryonic visceral yolk sac. In the proximal intestine, expression is predominant in the crypts but diminishes toward the apical regions of the villi.

The protein resides in the basolateral cell membrane. It catalyses the reaction Zn(2+)(in) = Zn(2+)(out). Functionally, uniporter that transports zinc(2+) into polarized cells of enterocytes, pancreatic acinar and endoderm cells across the basolateral membrane and participates, notably, in zinc excretion from the intestine by the uptake of zinc from the blood into the intestine. The transport mechanism is temperature- and concentration-dependent and saturable. In addition, is also a high affinity copper transporter in vitro. Also may regulate glucose-stimulated insulin secretion (GSIS) in islets primarily through the zinc-activated SIRT1-PPARGC1A axis. Could regulate the BMP/TGF-beta (bone morphogenetic protein/transforming growth factor-beta) signaling pathway and modulates extracellular matrix (ECM) proteins of the sclera. Plays a role in eye development. The chain is Zinc transporter ZIP5 from Mus musculus (Mouse).